Here is a 631-residue protein sequence, read N- to C-terminus: Pescadillo homolog (631 aa).

In terms of domain architecture, BRCT spans 321-414 (RLRTLFKGLK…QLLPTNDYFL (94 aa)). Basic and acidic residues predominate over residues 428–442 (SKRDSYIPPEEKALH). 3 disordered regions span residues 428-471 (SKRD…EADQ), 489-561 (YKKY…VDEH), and 602-631 (ADNK…KLVK). Serine 453 and serine 457 each carry phosphoserine. 2 stretches are compositionally biased toward acidic residues: residues 453 to 471 (SEEE…EADQ) and 498 to 525 (VNED…EDVD). A compositionally biased stretch (basic and acidic residues) spans 526–538 (EQTKRKQQEKEKM). Over residues 544 to 553 (KVHKVNKRQV) the composition is skewed to basic residues. Residues 591–631 (WLLRKKRRNIDADNKEAKKAAKREARKQAAEAAARAAKLVK) are a coiled coil. Over residues 602–619 (ADNKEAKKAAKREARKQA) the composition is skewed to basic and acidic residues. The segment covering 620-631 (AEAAARAAKLVK) has biased composition (low complexity).

The protein belongs to the pescadillo family.

The protein localises to the nucleus. The protein resides in the nucleolus. It is found in the nucleoplasm. In terms of biological role, required for maturation of ribosomal RNAs and formation of the large ribosomal subunit. The sequence is that of Pescadillo homolog from Drosophila pseudoobscura pseudoobscura (Fruit fly).